The following is a 261-amino-acid chain: Cytochrome c oxidase subunit 3 (261 aa).

The Mitochondrial matrix portion of the chain corresponds to 1-15 (MTHQTHAYHMVNPSP). The helical transmembrane segment at 16 to 34 (WPLTGALSALLMTSGLIMW) threads the bilayer. Residues 35 to 40 (FHFNST) are Mitochondrial intermembrane-facing. Residues 41–66 (TLLMLGLTTNMLTMYQWWRDIIREST) traverse the membrane as a helical segment. At 67-72 (FQGHHT) the chain is on the mitochondrial matrix side. A helical membrane pass occupies residues 73-105 (PSVQKGLRYGMILFIISEVLFFTGFFWAFYHSS). The Mitochondrial intermembrane portion of the chain corresponds to 106–128 (LAPTPELGGCWPPTGIHPLNPLE). The chain crosses the membrane as a helical span at residues 129–152 (VPLLNTSVLLASGVSITWAHHSLM). At 153–155 (EGN) the chain is on the mitochondrial matrix side. A helical transmembrane segment spans residues 156–183 (RNHMLQALFITIALGVYFTLLQASEYYE). Topologically, residues 184–190 (APFTISD) are mitochondrial intermembrane. The chain crosses the membrane as a helical span at residues 191–223 (GVYGSTFFVATGFHGLHVIIGSTFLIVCFFRQL). At 224–232 (KFHFTSNHH) the chain is on the mitochondrial matrix side. A helical transmembrane segment spans residues 233–256 (FGFEAAAWYWHFVDVVWLFLYVSI). At 257-261 (YWWGS) the chain is on the mitochondrial intermembrane side.

This sequence belongs to the cytochrome c oxidase subunit 3 family. In terms of assembly, component of the cytochrome c oxidase (complex IV, CIV), a multisubunit enzyme composed of 14 subunits. The complex is composed of a catalytic core of 3 subunits MT-CO1, MT-CO2 and MT-CO3, encoded in the mitochondrial DNA, and 11 supernumerary subunits COX4I, COX5A, COX5B, COX6A, COX6B, COX6C, COX7A, COX7B, COX7C, COX8 and NDUFA4, which are encoded in the nuclear genome. The complex exists as a monomer or a dimer and forms supercomplexes (SCs) in the inner mitochondrial membrane with NADH-ubiquinone oxidoreductase (complex I, CI) and ubiquinol-cytochrome c oxidoreductase (cytochrome b-c1 complex, complex III, CIII), resulting in different assemblies (supercomplex SCI(1)III(2)IV(1) and megacomplex MCI(2)III(2)IV(2)).

Its subcellular location is the mitochondrion inner membrane. The catalysed reaction is 4 Fe(II)-[cytochrome c] + O2 + 8 H(+)(in) = 4 Fe(III)-[cytochrome c] + 2 H2O + 4 H(+)(out). Functionally, component of the cytochrome c oxidase, the last enzyme in the mitochondrial electron transport chain which drives oxidative phosphorylation. The respiratory chain contains 3 multisubunit complexes succinate dehydrogenase (complex II, CII), ubiquinol-cytochrome c oxidoreductase (cytochrome b-c1 complex, complex III, CIII) and cytochrome c oxidase (complex IV, CIV), that cooperate to transfer electrons derived from NADH and succinate to molecular oxygen, creating an electrochemical gradient over the inner membrane that drives transmembrane transport and the ATP synthase. Cytochrome c oxidase is the component of the respiratory chain that catalyzes the reduction of oxygen to water. Electrons originating from reduced cytochrome c in the intermembrane space (IMS) are transferred via the dinuclear copper A center (CU(A)) of subunit 2 and heme A of subunit 1 to the active site in subunit 1, a binuclear center (BNC) formed by heme A3 and copper B (CU(B)). The BNC reduces molecular oxygen to 2 water molecules using 4 electrons from cytochrome c in the IMS and 4 protons from the mitochondrial matrix. The protein is Cytochrome c oxidase subunit 3 (MT-CO3) of Pelea capreolus (Gray rhebok).